Consider the following 150-residue polypeptide: Large ribosomal subunit protein bL9 (150 aa).

It belongs to the bacterial ribosomal protein bL9 family.

Its function is as follows. Binds to the 23S rRNA. This chain is Large ribosomal subunit protein bL9, found in Desulforudis audaxviator (strain MP104C).